The sequence spans 350 residues: Histidinol-phosphate aminotransferase (350 aa).

N6-(pyridoxal phosphate)lysine is present on K209.

This sequence belongs to the class-II pyridoxal-phosphate-dependent aminotransferase family. Histidinol-phosphate aminotransferase subfamily. In terms of assembly, homodimer. It depends on pyridoxal 5'-phosphate as a cofactor.

The enzyme catalyses L-histidinol phosphate + 2-oxoglutarate = 3-(imidazol-4-yl)-2-oxopropyl phosphate + L-glutamate. Its pathway is amino-acid biosynthesis; L-histidine biosynthesis; L-histidine from 5-phospho-alpha-D-ribose 1-diphosphate: step 7/9. The sequence is that of Histidinol-phosphate aminotransferase from Citrifermentans bemidjiense (strain ATCC BAA-1014 / DSM 16622 / JCM 12645 / Bem) (Geobacter bemidjiensis).